Here is a 345-residue protein sequence, read N- to C-terminus: NADH-quinone oxidoreductase subunit H (345 aa).

8 consecutive transmembrane segments (helical) span residues 14–34, 84–104, 115–135, 161–181, 187–207, 248–268, 277–297, and 309–329; these read IILA…LFLV, FILA…VIPF, VAIL…IMGG, IGLI…GDIV, GWGF…LFFI, YIAI…GWLS, VLWM…VKAI, and LGWK…AFAA.

This sequence belongs to the complex I subunit 1 family. As to quaternary structure, NDH-1 is composed of 14 different subunits. Subunits NuoA, H, J, K, L, M, N constitute the membrane sector of the complex.

It localises to the cell inner membrane. The enzyme catalyses a quinone + NADH + 5 H(+)(in) = a quinol + NAD(+) + 4 H(+)(out). Functionally, NDH-1 shuttles electrons from NADH, via FMN and iron-sulfur (Fe-S) centers, to quinones in the respiratory chain. The immediate electron acceptor for the enzyme in this species is believed to be ubiquinone. Couples the redox reaction to proton translocation (for every two electrons transferred, four hydrogen ions are translocated across the cytoplasmic membrane), and thus conserves the redox energy in a proton gradient. This subunit may bind ubiquinone. The chain is NADH-quinone oxidoreductase subunit H from Ruegeria pomeroyi (strain ATCC 700808 / DSM 15171 / DSS-3) (Silicibacter pomeroyi).